The following is a 2184-amino-acid chain: Genome polyprotein (2184 aa).

A lipid anchor (N-myristoyl glycine; by host) is attached at Gly-2. Residues 2-1494 (GAQVSTQKTG…HVSRAFICLQ (1493 aa)) lie on the Cytoplasmic side of the membrane. The tract at residues 567–583 (FYQGDVQNAVEGAMVRV) is amphipathic alpha-helix. Catalysis depends on for protease 2A activity residues His-871 and Asp-889. 2 residues coordinate Zn(2+): Cys-906 and Cys-908. Cys-960 (for protease 2A activity) is an active-site residue. Zn(2+) is bound by residues Cys-966 and His-968. The tract at residues 1100–1172 (NNGWLKKFTE…EQSAPSQGDQ (73 aa)) is membrane-binding. The tract at residues 1100–1238 (NNGWLKKFTE…SPGAGKSVAT (139 aa)) is oligomerization. The RNA-binding stretch occupies residues 1121 to 1125 (AIKIQ). One can recognise an SF3 helicase domain in the interval 1204–1360 (EKKMSNYIQF…SMYSQNGKIN (157 aa)). Zn(2+)-binding residues include Cys-1368, Cys-1380, and Cys-1385. The C4-type; degenerate zinc-finger motif lies at 1368-1385 (CDEDCCPVNFKKCCPLVC). The RNA-binding stretch occupies residues 1412–1419 (EYNHRHSV). An oligomerization region spans residues 1423–1428 (LEALFQ). The stretch at 1495-1510 (ALTTFVSVAGIIYIIY) is an intramembrane region. Residues 1511–2184 (KLFAGFQGAY…TLRRKWLDSF (674 aa)) lie on the Cytoplasmic side of the membrane. Tyr-1520 carries the post-translational modification O-(5'-phospho-RNA)-tyrosine. The region spanning 1540-1718 (GPAFEFAVAM…FSAALLRHYF (179 aa)) is the Peptidase C3 domain. Active-site for protease 3C activity residues include His-1579, Glu-1610, and Cys-1686. Residues 1949–2065 (GHLIAFDYSG…SYPWPIDASL (117 aa)) enclose the RdRp catalytic domain. Mg(2+)-binding residues include Asp-1955 and Asp-2051.

This sequence belongs to the picornaviruses polyprotein family. Interacts with capsid protein VP1 and capsid protein VP3 to form heterotrimeric protomers. In terms of assembly, interacts with capsid protein VP0, and capsid protein VP3 to form heterotrimeric protomers. Five protomers subsequently associate to form pentamers which serve as building blocks for the capsid. Interacts with capsid protein VP2, capsid protein VP3 and capsid protein VP4 following cleavage of capsid protein VP0. As to quaternary structure, interacts with capsid protein VP1 and capsid protein VP3 in the mature capsid. Interacts with capsid protein VP0 and capsid protein VP1 to form heterotrimeric protomers. Five protomers subsequently associate to form pentamers which serve as building blocks for the capsid. Interacts with capsid protein VP4 in the mature capsid. Interacts with protein 2C; this interaction may be important for virion morphogenesis. In terms of assembly, interacts with capsid protein VP1 and capsid protein VP3. As to quaternary structure, homodimer. Homohexamer; forms a hexameric ring structure with 6-fold symmetry characteristic of AAA+ ATPases. Interacts (via N-terminus) with host RTN3 (via reticulon domain); this interaction is important for viral replication. Interacts with capsid protein VP3; this interaction may be important for virion morphogenesis. In terms of assembly, interacts with protein 3CD. As to quaternary structure, homodimer. Interacts with host GBF1. Interacts (via GOLD domain) with host ACBD3 (via GOLD domain); this interaction allows the formation of a viral protein 3A/ACBD3 heterotetramer with a 2:2 stoichiometry, which will stimulate the recruitment of host PI4KB in order to synthesize PI4P at the viral RNA replication sites. Interacts with RNA-directed RNA polymerase. In terms of assembly, interacts with protein 3AB and with RNA-directed RNA polymerase. As to quaternary structure, interacts with Viral protein genome-linked and with protein 3CD. Requires Mg(2+) as cofactor. Post-translationally, specific enzymatic cleavages in vivo by the viral proteases yield processing intermediates and the mature proteins. In terms of processing, myristoylation is required for the formation of pentamers during virus assembly. Further assembly of 12 pentamers and a molecule of genomic RNA generates the provirion. During virion maturation, immature virions are rendered infectious following cleavage of VP0 into VP4 and VP2. This maturation seems to be an autocatalytic event triggered by the presence of RNA in the capsid and it is followed by a conformational change infectious virion. Post-translationally, myristoylation is required during RNA encapsidation and formation of the mature virus particle. In terms of processing, VPg is uridylylated by the polymerase into VPg-pUpU. This acts as a nucleotide-peptide primer for the genomic RNA replication.

The protein resides in the virion. The protein localises to the host cytoplasm. Its subcellular location is the host cytoplasmic vesicle membrane. It localises to the host nucleus. It carries out the reaction a ribonucleoside 5'-triphosphate + H2O = a ribonucleoside 5'-diphosphate + phosphate + H(+). It catalyses the reaction Selective cleavage of Tyr-|-Gly bond in the picornavirus polyprotein.. The catalysed reaction is RNA(n) + a ribonucleoside 5'-triphosphate = RNA(n+1) + diphosphate. The enzyme catalyses Selective cleavage of Gln-|-Gly bond in the poliovirus polyprotein. In other picornavirus reactions Glu may be substituted for Gln, and Ser or Thr for Gly.. With respect to regulation, replication or transcription is subject to high level of random mutations by the nucleotide analog ribavirin. Functionally, forms an icosahedral capsid of pseudo T=3 symmetry with capsid proteins VP2 and VP3. The capsid is 300 Angstroms in diameter, composed of 60 copies of each capsid protein and enclosing the viral positive strand RNA genome. Capsid protein VP1 mainly forms the vertices of the capsid. Capsid protein VP1 interacts with host ITGA2/ITGB1 to provide virion attachment to target host cells. This attachment induces virion internalization predominantly through caveolin-mediated endocytosis. Tyrosine kinases are probably involved in the entry process. After binding to its receptor, the capsid undergoes conformational changes. Capsid protein VP1 N-terminus (that contains an amphipathic alpha-helix) and capsid protein VP4 are externalized. Together, they shape a pore in the host membrane through which viral genome is translocated to host cell cytoplasm. Forms an icosahedral capsid of pseudo T=3 symmetry with capsid proteins VP2 and VP3. The capsid is 300 Angstroms in diameter, composed of 60 copies of each capsid protein and enclosing the viral positive strand RNA genome. Its function is as follows. Lies on the inner surface of the capsid shell. After binding to the host receptor, the capsid undergoes conformational changes. Capsid protein VP4 is released, Capsid protein VP1 N-terminus is externalized, and together, they shape a pore in the host membrane through which the viral genome is translocated into the host cell cytoplasm. In terms of biological role, component of immature procapsids, which is cleaved into capsid proteins VP4 and VP2 after maturation. Allows the capsid to remain inactive before the maturation step. Functionally, cysteine protease that cleaves viral polyprotein and specific host proteins. It is responsible for the autocatalytic cleavage between the P1 and P2 regions, which is the first cleavage occurring in the polyprotein. Also cleaves the host translation initiation factor EIF4G1, in order to shut down the capped cellular mRNA translation. Inhibits the host nucleus-cytoplasm protein and RNA trafficking by cleaving host members of the nuclear pores. Counteracts stress granule formation probably by antagonizing its assembly or promoting its dissassembly. Plays an essential role in the virus replication cycle by acting as a viroporin. Creates a pore in the host endoplasmic reticulum and as a consequence releases Ca2+ in the cytoplasm of infected cell. In turn, high levels of cytoplasmic calcium may trigger membrane trafficking and transport of viral ER-associated proteins to viroplasms, sites of viral genome replication. Its function is as follows. Induces and associates with structural rearrangements of intracellular membranes. Displays RNA-binding, nucleotide binding and NTPase activities. May play a role in virion morphogenesis and viral RNA encapsidation by interacting with the capsid protein VP3. In terms of biological role, localizes the viral replication complex to the surface of membranous vesicles. Together with protein 3CD binds the Cis-Active RNA Element (CRE) which is involved in RNA synthesis initiation. Acts as a cofactor to stimulate the activity of 3D polymerase, maybe through a nucleid acid chaperone activity. Functionally, localizes the viral replication complex to the surface of membranous vesicles. It inhibits host cell endoplasmic reticulum-to-Golgi apparatus transport and causes the disassembly of the Golgi complex, possibly through GBF1 interaction. This would result in depletion of MHC, trail receptors and IFN receptors at the host cell surface. Plays an essential role in viral RNA replication by recruiting ACBD3 and PI4KB at the viral replication sites, thereby allowing the formation of the rearranged membranous structures where viral replication takes place. Acts as a primer for viral RNA replication and remains covalently bound to viral genomic RNA. VPg is uridylylated prior to priming replication into VPg-pUpU. The oriI viral genomic sequence may act as a template for this. The VPg-pUpU is then used as primer on the genomic RNA poly(A) by the RNA-dependent RNA polymerase to replicate the viral genome. During genome replication, the VPg-RNA linkage is removed by the host TDP2, thereby accelerating replication. During the late stage of the replication cycle, host TDP2 is excluded from sites of viral RNA synthesis and encapsidation, allowing for the generation of progeny virions. Its function is as follows. Involved in the viral replication complex and viral polypeptide maturation. It exhibits protease activity with a specificity and catalytic efficiency that is different from protease 3C. Protein 3CD lacks polymerase activity. Protein 3CD binds to the 5'UTR of the viral genome. In terms of biological role, replicates the viral genomic RNA on the surface of intracellular membranes. May form linear arrays of subunits that propagate along a strong head-to-tail interaction called interface-I. Covalently attaches UMP to a tyrosine of VPg, which is used to prime RNA synthesis. The positive stranded RNA genome is first replicated at virus induced membranous vesicles, creating a dsRNA genomic replication form. This dsRNA is then used as template to synthesize positive stranded RNA genomes. ss(+)RNA genomes are either translated, replicated or encapsidated. Functionally, major viral protease that mediates proteolytic processing of the polyprotein. Cleaves host EIF5B, contributing to host translation shutoff. Also cleaves host PABPC1, contributing to host translation shutoff. Cleaves host NLRP1, triggers host N-glycine-mediated degradation of the autoinhibitory NLRP1 N-terminal fragment. This chain is Genome polyprotein, found in Homo sapiens (Human).